Reading from the N-terminus, the 117-residue chain is UPF0102 protein FTW_1281 (117 aa).

Belongs to the UPF0102 family.

This Francisella tularensis subsp. tularensis (strain WY96-3418) protein is UPF0102 protein FTW_1281.